Here is a 380-residue protein sequence, read N- to C-terminus: Cytochrome b (380 aa).

The next 4 membrane-spanning stretches (helical) occupy residues 34-54 (FGSL…LLAA), 78-99 (WLIR…YLHI), 114-134 (WNTG…GYVL), and 179-199 (FFTL…IHLT). Histidine 84 and histidine 98 together coordinate heme b. 2 residues coordinate heme b: histidine 183 and histidine 197. An a ubiquinone-binding site is contributed by histidine 202. The next 4 helical transmembrane spans lie at 227–247 (LKDI…ALFS), 289–309 (LGGV…PLLH), 321–341 (FSQL…WVGS), and 348–368 (FIII…ILFP).

This sequence belongs to the cytochrome b family. As to quaternary structure, the cytochrome bc1 complex contains 11 subunits: 3 respiratory subunits (MT-CYB, CYC1 and UQCRFS1), 2 core proteins (UQCRC1 and UQCRC2) and 6 low-molecular weight proteins (UQCRH/QCR6, UQCRB/QCR7, UQCRQ/QCR8, UQCR10/QCR9, UQCR11/QCR10 and a cleavage product of UQCRFS1). This cytochrome bc1 complex then forms a dimer. The cofactor is heme b.

Its subcellular location is the mitochondrion inner membrane. Its function is as follows. Component of the ubiquinol-cytochrome c reductase complex (complex III or cytochrome b-c1 complex) that is part of the mitochondrial respiratory chain. The b-c1 complex mediates electron transfer from ubiquinol to cytochrome c. Contributes to the generation of a proton gradient across the mitochondrial membrane that is then used for ATP synthesis. The sequence is that of Cytochrome b (MT-CYB) from Antigone antigone (Sarus crane).